Reading from the N-terminus, the 147-residue chain is Hemoglobin subunit beta-1 (147 aa).

An N-acetylvaline modification is found at valine 2. Positions 3–147 constitute a Globin domain; the sequence is HLTGEEKAAV…VATALAHKYH (145 aa). N6-succinyllysine is present on lysine 18. Phosphoserine is present on serine 45. Lysine 60 is modified (N6-succinyllysine). Histidine 64 and histidine 93 together coordinate heme b. Arginine 105 bears the Asymmetric dimethylarginine mark. Position 124 is a phosphothreonine (threonine 124).

Belongs to the globin family. Hb1 is a heterotetramer of two alpha chains and two beta-1 chains. In terms of tissue distribution, red blood cells.

Involved in oxygen transport from the lung to the various peripheral tissues. The chain is Hemoglobin subunit beta-1 (HBB1) from Chalinolobus morio (Chocolate-wattled bat).